The following is a 348-amino-acid chain: MSDIMSTFSWLYGKPVATGKLKQLPEHFIVKEVLGYEFTGKGEHLMVKIRKTGENTKYVANEFAKFCGVKSKDISWAGLKDRHAVTEQWLSVHLPKSDHLNFVLFEVAHPGVEILEMTRHHKKLRPGDLLGNSFQLIATEVTDMDDVLARLEKVKVTGVPNYFGAQRFGHEGNNVTEARRWGRENVRTRDNTKRSFYLSAARSWIFNHIISQRITEGYFSLPVDGDILLDQNDRTVNENVTSEDCIQKIKKGELSISAALAGDNQLPTTEKALMFEQPQLDAEPDLMALIRGNRMRHERRSIELHPENLHWSVEGDQLTLNFSLTSGSFATVIVRELLQEIEVERTYD.

Residue Asp-81 is the Nucleophile of the active site. The region spanning 158-304 is the TRUD domain; sequence GVPNYFGAQR…MRHERRSIEL (147 aa).

This sequence belongs to the pseudouridine synthase TruD family.

The catalysed reaction is uridine(13) in tRNA = pseudouridine(13) in tRNA. Functionally, responsible for synthesis of pseudouridine from uracil-13 in transfer RNAs. The protein is tRNA pseudouridine synthase D of Aliivibrio salmonicida (strain LFI1238) (Vibrio salmonicida (strain LFI1238)).